We begin with the raw amino-acid sequence, 165 residues long: Chorismate pyruvate-lyase (165 aa).

Residues Met-35, Arg-77, Leu-115, and Glu-156 each contribute to the substrate site.

The protein belongs to the UbiC family. As to quaternary structure, monomer.

The protein resides in the cytoplasm. The catalysed reaction is chorismate = 4-hydroxybenzoate + pyruvate. The protein operates within cofactor biosynthesis; ubiquinone biosynthesis. Removes the pyruvyl group from chorismate, with concomitant aromatization of the ring, to provide 4-hydroxybenzoate (4HB) for the ubiquinone pathway. The polypeptide is Chorismate pyruvate-lyase (Escherichia coli O127:H6 (strain E2348/69 / EPEC)).